Here is a 280-residue protein sequence, read N- to C-terminus: Myb family transcription factor PHL11 (280 aa).

Positions 20-80 (RDPKPRLRWT…HLQKYRLGQQ (61 aa)) constitute an HTH myb-type domain. Residues 51–76 (PKSVLKLMGLKGLTLYHLKSHLQKYR) constitute a DNA-binding region (H-T-H motif). Residues 77–98 (LGQQQGKKQNRTEQNKENAGSS) form a disordered region. The segment at 129-149 (AEAMRHQVDAQQRFQEQLEVQ) is coiled coil. The short motif at 142–147 (FQEQLE) is the LHEQLE element.

Belongs to the MYB-CC family.

It localises to the nucleus. The chain is Myb family transcription factor PHL11 from Arabidopsis thaliana (Mouse-ear cress).